The sequence spans 143 residues: Cytochrome c-type biogenesis protein CcmE (143 aa).

The Cytoplasmic segment spans residues 1–8; the sequence is MTPVRRRK. Residues 9–29 form a helical; Signal-anchor for type II membrane protein membrane-spanning segment; sequence LFILLFALSVLSAAAALVLYA. At 30–143 the chain is on the periplasmic side; sequence LRQNISLFYT…KSALADKVKQ (114 aa). The heme site is built by His124 and Tyr128.

Belongs to the CcmE/CycJ family.

The protein localises to the cell inner membrane. Functionally, heme chaperone required for the biogenesis of c-type cytochromes. Transiently binds heme delivered by CcmC and transfers the heme to apo-cytochromes in a process facilitated by CcmF and CcmH. In Legionella pneumophila, this protein is Cytochrome c-type biogenesis protein CcmE.